Here is a 568-residue protein sequence, read N- to C-terminus: Matrix metalloproteinase-21 (568 aa).

The signal sequence occupies residues 1-24 (MLAASVLRLTLPLCWLVAPQPTQP). A propeptide spanning residues 25–143 (ERLFHSRDRS…SLGLRPRARQ (119 aa)) is cleaved from the precursor. A Cysteine switch motif is present at residues 110-117 (PRCGVPDT). C112 and H282 together coordinate Zn(2+). E283 is an active-site residue. H286 and H292 together coordinate Zn(2+). The cysteines at positions 328 and 559 are disulfide-linked. Hemopexin repeat units lie at residues 329–388 (KGSF…WRGI), 390–446 (TQSI…FPGI), 447–495 (PSPL…FPAI), and 502–558 (FRNL…WFDV). N-linked (GlcNAc...) asparagine glycosylation occurs at N371.

The protein belongs to the peptidase M10A family. It depends on Zn(2+) as a cofactor. Ca(2+) is required as a cofactor. The precursor is cleaved by a furin endopeptidase.

Its subcellular location is the secreted. Plays a specialized role in the generation of left-right asymmetry during embryogenesis. May act as a negative regulator of the NOTCH-signaling pathway. Cleaves alpha-1-antitrypsin. The polypeptide is Matrix metalloproteinase-21 (Mmp21) (Mus musculus (Mouse)).